A 354-amino-acid chain; its full sequence is G protein alpha o subunit (354 aa).

Gly-2 carries the N-myristoyl glycine lipid modification. A lipid anchor (S-palmitoyl cysteine) is attached at Cys-3. The G-alpha domain maps to 32–354 (KDIKLLLLGA…ANNLRGCGLY (323 aa)). The tract at residues 35–48 (KLLLLGAGESGKST) is G1 motif. Residues 40-47 (GAGESGKS), 176-182 (LRTRVKT), 201-205 (DVGGQ), 270-273 (NKKD), and Ala-326 each bind GTP. Positions 47 and 182 each coordinate Mg(2+). Positions 174–182 (DILRTRVKT) are G2 motif. Residues 197-206 (FKLFDVGGQR) are G3 motif. Residues 266 to 273 (ILFLNKKD) form a G4 motif region. The interval 324–329 (TCATDT) is G5 motif.

This sequence belongs to the G-alpha family. G(i/o/t/z) subfamily. In terms of assembly, g proteins are composed of 3 units; alpha, beta and gamma. The alpha chain contains the guanine nucleotide binding site. In terms of tissue distribution, expressed primarily in neuronal cell bodies in the brain, optic lobe, and thoracic and abdominal ganglia. Also expressed in antenna, oocytes and ovarian nurse cells.

Guanine nucleotide-binding proteins (G proteins) are involved as modulators or transducers in various transmembrane signaling systems. Plays a role in glial cell differentiation during embryogenesis; loco, Galphai and the G-protein coupled receptor, moody, are required in the surface glia to achieve effective insulation of the nerve cord. This chain is G protein alpha o subunit (Galphao), found in Drosophila melanogaster (Fruit fly).